The following is a 193-amino-acid chain: Thioredoxin reductase-like selenoprotein T1a (193 aa).

A signal peptide spans 1 to 21; that stretch reads MRWLPFSALLLWALCLHSASA. The segment at residues 44–47 is a cross-link (cysteinyl-selenocysteine (Cys-Sec)); sequence CVSU. Position 47 (Sec-47) is a non-standard amino acid, selenocysteine. Residues 83 to 101 traverse the membrane as a helical segment; it reads IASFLSMFKLLLIGVIILG.

Belongs to the SelWTH family. Selenoprotein T subfamily. Post-translationally, may contain a selenide-sulfide bond between Cys-44 and Sec-47. This bond is speculated to serve as redox-active pair. In terms of tissue distribution, expressed in embryonic olfactory vesicles and the photoreceptor cell layer of the embryonic retina. Low level in embryonic epiphysis.

The protein resides in the endoplasmic reticulum membrane. It carries out the reaction [thioredoxin]-dithiol + NADP(+) = [thioredoxin]-disulfide + NADPH + H(+). In terms of biological role, selenoprotein with thioredoxin reductase-like oxidoreductase activity. The chain is Thioredoxin reductase-like selenoprotein T1a from Danio rerio (Zebrafish).